A 377-amino-acid chain; its full sequence is Methylthioribose-1-phosphate isomerase (377 aa).

D254 acts as the Proton donor in catalysis.

Belongs to the eIF-2B alpha/beta/delta subunits family. MtnA subfamily.

It localises to the cytoplasm. It is found in the nucleus. It catalyses the reaction 5-(methylsulfanyl)-alpha-D-ribose 1-phosphate = 5-(methylsulfanyl)-D-ribulose 1-phosphate. The protein operates within amino-acid biosynthesis; L-methionine biosynthesis via salvage pathway; L-methionine from S-methyl-5-thio-alpha-D-ribose 1-phosphate: step 1/6. Catalyzes the interconversion of methylthioribose-1-phosphate (MTR-1-P) into methylthioribulose-1-phosphate (MTRu-1-P). In Aspergillus terreus (strain NIH 2624 / FGSC A1156), this protein is Methylthioribose-1-phosphate isomerase (mri1).